The chain runs to 235 residues: Phosphoribosylaminoimidazole-succinocarboxamide synthase (235 aa).

This sequence belongs to the SAICAR synthetase family.

It catalyses the reaction 5-amino-1-(5-phospho-D-ribosyl)imidazole-4-carboxylate + L-aspartate + ATP = (2S)-2-[5-amino-1-(5-phospho-beta-D-ribosyl)imidazole-4-carboxamido]succinate + ADP + phosphate + 2 H(+). It participates in purine metabolism; IMP biosynthesis via de novo pathway; 5-amino-1-(5-phospho-D-ribosyl)imidazole-4-carboxamide from 5-amino-1-(5-phospho-D-ribosyl)imidazole-4-carboxylate: step 1/2. The chain is Phosphoribosylaminoimidazole-succinocarboxamide synthase from Sulfolobus acidocaldarius (strain ATCC 33909 / DSM 639 / JCM 8929 / NBRC 15157 / NCIMB 11770).